A 684-amino-acid chain; its full sequence is Pescadillo homolog (684 aa).

Residues 284 to 352 (DAAAAEASSN…DSDEEADDEA (69 aa)) are disordered. The span at 285-294 (AAAAEASSNA) shows a compositional bias: low complexity. Residues 296 to 310 (TRKDGKKLSTRDVKR) are compositionally biased toward basic and acidic residues. The segment covering 342–352 (QDSDEEADDEA) has biased composition (acidic residues). Residues 387–486 (PLPMLFSRYV…QILPTDPYRP (100 aa)) form the BRCT domain. Disordered regions lie at residues 508–580 (GYVP…ALLA) and 612–684 (AASL…NKKP). Residues 528-543 (ADEDEDEDEDEDEDED) show a composition bias toward acidic residues. The span at 544–570 (KAGSGRGDDKNVAAREQDAVEKHDKTP) shows a compositional bias: basic and acidic residues. The segment covering 612 to 624 (AASLKSHKKKKRT) has biased composition (basic residues). Over residues 663–675 (KKKEEKMRLEAKK) the composition is skewed to basic and acidic residues.

The protein belongs to the pescadillo family. In terms of assembly, component of the NOP7 complex, composed of ERB1, NOP7 and YTM1. The complex is held together by ERB1, which interacts with NOP7 via its N-terminal domain and with YTM1 via a high-affinity interaction between the seven-bladed beta-propeller domains of the 2 proteins. The NOP7 complex associates with the 66S pre-ribosome.

It localises to the nucleus. The protein resides in the nucleolus. It is found in the nucleoplasm. Its function is as follows. Component of the NOP7 complex, which is required for maturation of the 25S and 5.8S ribosomal RNAs and formation of the 60S ribosome. This chain is Pescadillo homolog, found in Malassezia globosa (strain ATCC MYA-4612 / CBS 7966) (Dandruff-associated fungus).